A 191-amino-acid chain; its full sequence is MRVITLAGSPRFPSRSSSLLEYAREKLNGLDVEVYHWNLQNFAPEDLLYARFDSPALKTFTEQLQQADGLIVATPVYKAAYSGALKTLLDLLPERALQGKVVLPLATGGTVAHLLAVDYALKPVLSALKAQEILHGVFADDSQVIDYHHRPQFTPNLQTRLDTALETFWQALHRRDVQVPDLLSLRGNAHA.

The protein belongs to the SsuE family. In terms of assembly, homodimer.

The enzyme catalyses FMNH2 + NADP(+) = FMN + NADPH + 2 H(+). In terms of biological role, catalyzes an NADPH-dependent reduction of FMN, but is also able to reduce FAD or riboflavin. In Escherichia coli (strain K12), this protein is FMN reductase (NADPH) (ssuE).